Here is a 366-residue protein sequence, read N- to C-terminus: DNA-directed RNA polymerase II subunit GRINL1A (366 aa).

The disordered stretch occupies residues 1 to 23 (MFSLPRGFEPPAPEDLGRQSSAE). A coiled-coil region spans residues 15 to 39 (DLGRQSSAELRERLRRQERLLRNEK). The segment at 29–68 (RRQERLLRNEKFICKLPDKGKKISDTVAKLKAAISEREEV) is important for transcription repressor activity. 4 disordered regions span residues 88–140 (ATTR…HRGN), 158–182 (IRARAPSSEVKEHLPQHSVSSQEEE), 201–225 (ADQSEPSEENTSTENFPELQSETPK), and 237–280 (ARNP…RRAR). Residues 90 to 100 (TRADTDVDKAQ) show a composition bias toward basic and acidic residues. Residues 101–127 (SSDLMLDTSSLDPDCSSIDIKSSKSTS) show a composition bias toward low complexity. Positions 225–296 (KKPHYMKVLE…TAARLLPLHH (72 aa)) are interaction with Pol II. The segment covering 251–272 (VLPTQQSDSPSHCQRGQSPASS) has biased composition (polar residues). S268 bears the Phosphoserine mark. Positions 297 to 312 (LPAQLLSIEESLALQR) are important for transcription repressor activity. The stretch at 299 to 333 (AQLLSIEESLALQREQKQNYEEMQAKLAAQKLAER) forms a coiled coil. The interval 313–338 (EQKQNYEEMQAKLAAQKLAERLNIKM) is interaction with Pol II. A disordered region spans residues 338–366 (MQSYNPEGESSGRYREVRDEADAQSSDEC). Residues 347–358 (SSGRYREVRDEA) are compositionally biased toward basic and acidic residues.

This sequence belongs to the GRINL1 family. Component of the Pol II(G) complex, which contains the RNA polymerase II (Pol II) core complex subunits and POLR2M isoform 1. Pol II(G) appears to be an abundant form of Pol II. Post-translationally, dephosphorylated at Ser-268 by the PNUTS-PP1 complex, promoting RNA polymerase II transcription pause-release.

It localises to the nucleus. In terms of biological role, appears to be a stable component of the Pol II(G) complex form of RNA polymerase II (Pol II). Pol II synthesizes mRNA precursors and many functional non-coding RNAs and is the central component of the basal RNA polymerase II transcription machinery. May play a role in the Mediator complex-dependent regulation of transcription activation. Acts as a negative regulator of transcriptional activation; this repression is relieved by the Mediator complex, which restores Pol II(G) activator-dependent transcription to a level equivalent to that of Pol II. The chain is DNA-directed RNA polymerase II subunit GRINL1A (Polr2m) from Mus musculus (Mouse).